The chain runs to 126 residues: Large ribosomal subunit protein uL22 (126 aa).

It belongs to the universal ribosomal protein uL22 family. Part of the 50S ribosomal subunit.

Its function is as follows. This protein binds specifically to 23S rRNA; its binding is stimulated by other ribosomal proteins, e.g. L4, L17, and L20. It is important during the early stages of 50S assembly. It makes multiple contacts with different domains of the 23S rRNA in the assembled 50S subunit and ribosome. In terms of biological role, the globular domain of the protein is located near the polypeptide exit tunnel on the outside of the subunit, while an extended beta-hairpin is found that lines the wall of the exit tunnel in the center of the 70S ribosome. The protein is Large ribosomal subunit protein uL22 of Paracoccus denitrificans (strain Pd 1222).